A 314-amino-acid polypeptide reads, in one-letter code: 4-hydroxy-3-methylbut-2-enyl diphosphate reductase (314 aa).

Cys12 is a binding site for [4Fe-4S] cluster. Residues His41 and His74 each contribute to the (2E)-4-hydroxy-3-methylbut-2-enyl diphosphate site. Dimethylallyl diphosphate contacts are provided by His41 and His74. His41 and His74 together coordinate isopentenyl diphosphate. Cys96 serves as a coordination point for [4Fe-4S] cluster. His124 contributes to the (2E)-4-hydroxy-3-methylbut-2-enyl diphosphate binding site. His124 is a dimethylallyl diphosphate binding site. Residue His124 participates in isopentenyl diphosphate binding. Glu126 functions as the Proton donor in the catalytic mechanism. Residue Thr167 coordinates (2E)-4-hydroxy-3-methylbut-2-enyl diphosphate. Cys197 provides a ligand contact to [4Fe-4S] cluster. Ser225, Ser226, Asn227, and Ser269 together coordinate (2E)-4-hydroxy-3-methylbut-2-enyl diphosphate. Dimethylallyl diphosphate contacts are provided by Ser225, Ser226, Asn227, and Ser269. Isopentenyl diphosphate is bound by residues Ser225, Ser226, Asn227, and Ser269.

It belongs to the IspH family. It depends on [4Fe-4S] cluster as a cofactor.

The enzyme catalyses isopentenyl diphosphate + 2 oxidized [2Fe-2S]-[ferredoxin] + H2O = (2E)-4-hydroxy-3-methylbut-2-enyl diphosphate + 2 reduced [2Fe-2S]-[ferredoxin] + 2 H(+). It carries out the reaction dimethylallyl diphosphate + 2 oxidized [2Fe-2S]-[ferredoxin] + H2O = (2E)-4-hydroxy-3-methylbut-2-enyl diphosphate + 2 reduced [2Fe-2S]-[ferredoxin] + 2 H(+). It participates in isoprenoid biosynthesis; dimethylallyl diphosphate biosynthesis; dimethylallyl diphosphate from (2E)-4-hydroxy-3-methylbutenyl diphosphate: step 1/1. The protein operates within isoprenoid biosynthesis; isopentenyl diphosphate biosynthesis via DXP pathway; isopentenyl diphosphate from 1-deoxy-D-xylulose 5-phosphate: step 6/6. Its function is as follows. Catalyzes the conversion of 1-hydroxy-2-methyl-2-(E)-butenyl 4-diphosphate (HMBPP) into a mixture of isopentenyl diphosphate (IPP) and dimethylallyl diphosphate (DMAPP). Acts in the terminal step of the DOXP/MEP pathway for isoprenoid precursor biosynthesis. This is 4-hydroxy-3-methylbut-2-enyl diphosphate reductase from Glaesserella parasuis serovar 5 (strain SH0165) (Haemophilus parasuis).